The sequence spans 232 residues: Phosphoglycolate phosphatase (232 aa).

Asp-13 acts as the Nucleophile in catalysis. Residues Asp-13, Asp-15, and Asp-175 each contribute to the Mg(2+) site.

It belongs to the HAD-like hydrolase superfamily. CbbY/CbbZ/Gph/YieH family. As to quaternary structure, monomer. The cofactor is Mg(2+). Requires chloride as cofactor.

The enzyme catalyses 2-phosphoglycolate + H2O = glycolate + phosphate. Its pathway is organic acid metabolism; glycolate biosynthesis; glycolate from 2-phosphoglycolate: step 1/1. Specifically catalyzes the dephosphorylation of 2-phosphoglycolate. Is involved in the dissimilation of the intracellular 2-phosphoglycolate formed during the DNA repair of 3'-phosphoglycolate ends, a major class of DNA lesions induced by oxidative stress. The sequence is that of Phosphoglycolate phosphatase from Yersinia pestis.